The primary structure comprises 236 residues: Truncated formate dehydrogenase 2 (236 aa).

NAD(+)-binding positions include 36–37 (RI), D57, 104–108 (PLHKD), T130, D156, and 185–188 (HISG).

Belongs to the D-isomer specific 2-hydroxyacid dehydrogenase family. FDH subfamily.

In Saccharomyces cerevisiae (strain ATCC 204508 / S288c) (Baker's yeast), this protein is Truncated formate dehydrogenase 2.